The sequence spans 293 residues: Hydroxyquinol 1,2-dioxygenase (293 aa).

4 residues coordinate Fe cation: tyrosine 164, tyrosine 197, histidine 221, and histidine 223.

It belongs to the intradiol ring-cleavage dioxygenase family. Homodimer. Fe(3+) is required as a cofactor.

It carries out the reaction benzene-1,2,4-triol + O2 = maleylacetate + 2 H(+). It functions in the pathway aromatic compound metabolism; beta-ketoadipate pathway; 3-oxoadipate from 3,4-dihydroxybenzoate: step 2/4. Its activity is regulated as follows. Inhibited by 3,5-dichlorocatechol, chlorohydroquinone and 4,5-dibromocatechol. Functionally, catalyzes the ortho-cleavage of the aromatic ring of hydroxyquinol. The chain is Hydroxyquinol 1,2-dioxygenase (chqB) from Nocardioides simplex (Arthrobacter simplex).